The sequence spans 333 residues: MSGDEMIFDPTMSKKKKKKKKPFMLDEEGDTQTEETQPSETKEVEPEPTEDKDLEADEEDTRKKDASDDLDDLNFFNQKKKKKKTKKIFDIDEAEEGVKDLKIESDVQEPTEPEDDLDIMLGNKKKKKKNVKFPDEDEILEKDEALEDEDNKKDDGISFSNQTGPAWAGSERDYTYEELLNRVFNIMREKNPDMVAGEKRKFVMKPPQVVRVGTKKTSFVNFTDICKLLHRQPKHLLAFLLAELGTSGSIDGNNQLVIKGRFQQKQIENVLRRYIKEYVTCHTCRSPDTILQKDTRLYFLQCETCHSRCSAASIKTGFQAVTGKRAQLRAKAN.

Disordered stretches follow at residues 1-119 and 139-164; these read MSGD…DLDI and ILEKDEALEDEDNKKDDGISFSNQTG. An N-acetylserine modification is found at Ser2. Phosphoserine occurs at positions 2 and 13. Basic residues predominate over residues 13–22; the sequence is SKKKKKKKKP. A phosphothreonine mark is found at Thr31 and Thr36. Residues 40–51 show a composition bias toward basic and acidic residues; that stretch reads ETKEVEPEPTED. Ser67 is subject to Phosphoserine. A compositionally biased stretch (basic and acidic residues) spans 96-105; it reads EGVKDLKIES. Residue Lys102 forms a Glycyl lysine isopeptide (Lys-Gly) (interchain with G-Cter in SUMO2) linkage. At Ser105 the chain carries Phosphoserine. 2 stretches are compositionally biased toward acidic residues: residues 106–118 and 139–149; these read DVQEPTEPEDDLD and ILEKDEALEDE. Thr111 carries the post-translational modification Phosphothreonine. Residues Ser158 and Ser218 each carry the phosphoserine modification. Residues Lys265 and Lys293 each carry the N6-acetyllysine modification. A C4-type zinc finger spans residues 281–305; that stretch reads CHTCRSPDTILQKDTRLYFLQCETC.

Belongs to the eIF-2-beta/eIF-5 family. As to quaternary structure, eukaryotic translation initiation factor 2 eIF2 is a heterotrimeric complex composed of an alpha (EIF2S1), a beta (EIF2S2) and a gamma (EIF2S3) chain. eIF2 is member of the 43S pre-initiation complex (43S PIC). eIF2 forms a complex with at least CELF1/CUGBP1, CALR, CALR3, EIF2S1, EIF2S2, HSP90B1 and HSPA5. Interacts with BZW2/5MP1. Interacts with EIF5.

It localises to the cytoplasm. The protein localises to the cytosol. Its function is as follows. Component of the eIF2 complex that functions in the early steps of protein synthesis by forming a ternary complex with GTP and initiator tRNA. This complex binds to a 40S ribosomal subunit, followed by mRNA binding to form the 43S pre-initiation complex (43S PIC). Junction of the 60S ribosomal subunit to form the 80S initiation complex is preceded by hydrolysis of the GTP bound to eIF2 and release of an eIF2-GDP binary complex. In order for eIF2 to recycle and catalyze another round of initiation, the GDP bound to eIF2 must exchange with GTP by way of a reaction catalyzed by eIF2B. The polypeptide is Eukaryotic translation initiation factor 2 subunit 2 (EIF2S2) (Pongo abelii (Sumatran orangutan)).